A 288-amino-acid polypeptide reads, in one-letter code: Small ribosomal subunit protein uS3 (288 aa).

Residues 39 to 107 (VREYLKAKLK…PVAVNIEEVR (69 aa)) form the KH type-2 domain. Residues 209 to 288 (GRNDLPAAET…AAAAADGKGE (80 aa)) form a disordered region. Positions 219–238 (PRPEEERRPRGPRRDGRPGD) are enriched in basic and acidic residues. Low complexity predominate over residues 277 to 288 (APAAAAADGKGE).

This sequence belongs to the universal ribosomal protein uS3 family. In terms of assembly, part of the 30S ribosomal subunit. Forms a tight complex with proteins S10 and S14.

Binds the lower part of the 30S subunit head. Binds mRNA in the 70S ribosome, positioning it for translation. This is Small ribosomal subunit protein uS3 from Acidovorax sp. (strain JS42).